A 111-amino-acid chain; its full sequence is Cytochrome c3, 26 kDa (111 aa).

16 residues coordinate heme c: histidine 30, histidine 33, cysteine 38, cysteine 41, histidine 42, histidine 43, cysteine 54, cysteine 59, histidine 60, histidine 77, cysteine 86, cysteine 89, histidine 90, cysteine 105, cysteine 108, and histidine 109.

Homodimer. Heme c serves as cofactor.

It localises to the periplasm. Participates in sulfate respiration coupled with phosphorylation by transferring electrons from the enzyme dehydrogenase to ferredoxin. The polypeptide is Cytochrome c3, 26 kDa (Desulfomicrobium norvegicum (strain DSM 1741 / NCIMB 8310) (Desulfovibrio baculatus (strain Norway 4))).